Consider the following 312-residue polypeptide: Ornithine carbamoyltransferase (312 aa).

Residues 50 to 53 (STRT), Q77, R101, and 128 to 131 (HPCQ) contribute to the carbamoyl phosphate site. Residues N160, D224, and 228–229 (SM) contribute to the L-ornithine site. Carbamoyl phosphate contacts are provided by residues 264-265 (CL) and R292.

The protein belongs to the aspartate/ornithine carbamoyltransferase superfamily. OTCase family.

It localises to the cytoplasm. The catalysed reaction is carbamoyl phosphate + L-ornithine = L-citrulline + phosphate + H(+). Its pathway is amino-acid biosynthesis; L-arginine biosynthesis; L-arginine from L-ornithine and carbamoyl phosphate: step 1/3. Reversibly catalyzes the transfer of the carbamoyl group from carbamoyl phosphate (CP) to the N(epsilon) atom of ornithine (ORN) to produce L-citrulline. The protein is Ornithine carbamoyltransferase of Leifsonia xyli subsp. xyli (strain CTCB07).